The primary structure comprises 258 residues: Imidazole glycerol phosphate synthase subunit HisF (258 aa).

Catalysis depends on residues Asp11 and Asp130.

This sequence belongs to the HisA/HisF family. In terms of assembly, heterodimer of HisH and HisF.

It is found in the cytoplasm. It carries out the reaction 5-[(5-phospho-1-deoxy-D-ribulos-1-ylimino)methylamino]-1-(5-phospho-beta-D-ribosyl)imidazole-4-carboxamide + L-glutamine = D-erythro-1-(imidazol-4-yl)glycerol 3-phosphate + 5-amino-1-(5-phospho-beta-D-ribosyl)imidazole-4-carboxamide + L-glutamate + H(+). Its pathway is amino-acid biosynthesis; L-histidine biosynthesis; L-histidine from 5-phospho-alpha-D-ribose 1-diphosphate: step 5/9. In terms of biological role, IGPS catalyzes the conversion of PRFAR and glutamine to IGP, AICAR and glutamate. The HisF subunit catalyzes the cyclization activity that produces IGP and AICAR from PRFAR using the ammonia provided by the HisH subunit. This chain is Imidazole glycerol phosphate synthase subunit HisF, found in Escherichia fergusonii (strain ATCC 35469 / DSM 13698 / CCUG 18766 / IAM 14443 / JCM 21226 / LMG 7866 / NBRC 102419 / NCTC 12128 / CDC 0568-73).